Consider the following 199-residue polypeptide: Thymidine kinase (199 aa).

ATP contacts are provided by residues 9–16 and 93–96; these read GAMSSGKS and DEAQ. The active-site Proton acceptor is Glu94. Positions 151, 154, 188, and 191 each coordinate Zn(2+).

Belongs to the thymidine kinase family. Homotetramer.

The protein resides in the cytoplasm. The enzyme catalyses thymidine + ATP = dTMP + ADP + H(+). This Lactobacillus johnsonii (strain CNCM I-12250 / La1 / NCC 533) protein is Thymidine kinase.